We begin with the raw amino-acid sequence, 809 residues long: AP-3 complex subunit beta (809 aa).

5 HEAT repeats span residues 37–76 (YYSQ…DDDS), 112–151 (DPNL…SSLA), 153–186 (IILH…AGKN), 187–224 (DYHE…DHLE), and 524–561 (KICP…YDID). Ser-693, Ser-698, Ser-724, and Ser-726 each carry phosphoserine. Disordered stretches follow at residues 708–739 (FTSS…FTSQ) and 763–809 (PRKI…HLEL). Residues 722–739 (GDSNSISGKGNVNTFTSQ) show a composition bias toward polar residues. Positions 772-791 (ESSDEDEDESEESSDDDEYS) are enriched in acidic residues. A compositionally biased stretch (low complexity) spans 792–809 (DSSLGTSSSGTSSSHLEL).

Belongs to the adaptor complexes large subunit family. As to quaternary structure, adaptor protein complex 3 (AP-3) is a heterotetramer composed of 2 large adaptins (APL5 and APL6), a medium adaptin (APM3) and a small adaptin (APS3). Pyrophosphorylated by 5-diphosphoinositol pentakisphosphate (5-IP7). Serine pyrophosphorylation is achieved by Mg(2+)-dependent, but enzyme independent transfer of a beta-phosphate from a inositol pyrophosphate to a pre-phosphorylated serine residue.

The protein localises to the golgi apparatus. It is found in the cytoplasmic vesicle. The protein resides in the clathrin-coated vesicle membrane. In terms of biological role, part of the AP-3 complex, an adaptor-related complex which is not clathrin-associated. The complex is associated with the Golgi region as well as more peripheral structures. It facilitates the budding of vesicles from the Golgi membrane and may be directly involved in trafficking to the vacuole. Required for the transport via the ALP pathway, which directs the transport of the cargo proteins PHO8 and VAM3 to the vacuole. In Saccharomyces cerevisiae (strain ATCC 204508 / S288c) (Baker's yeast), this protein is AP-3 complex subunit beta (APL6).